Here is a 273-residue protein sequence, read N- to C-terminus: DnaJ homolog subfamily C member 27 (273 aa).

Residues 1 to 18 (MEANMPKRKEPGRSLRIK) are required for interaction with MAPK1. Residues 23–30 (GNAEVGKS), 71–75 (DMAGH), and 134–137 (NKID) each bind GTP. The 57-residue stretch at 217–273 (GSWDMLGVKPGASRDEVNKACRKLAVLLHPDKCVAPGSEDAFKAVVNARTALLKNIK) folds into the J domain.

It belongs to the small GTPase superfamily. Rab family. Interacts directly with MAPK1 (wild-type and kinase-deficient forms). Interacts directly (in GTP-bound form) with MAP2K1 (wild-type and kinase-deficient forms).

It localises to the nucleus. Functionally, GTPase which can activate the MEK/ERK pathway and induce cell transformation when overexpressed. May act as a nuclear scaffold for MAPK1, probably by association with MAPK1 nuclear export signal leading to enhanced ERK1/ERK2 signaling. This chain is DnaJ homolog subfamily C member 27 (DNAJC27), found in Pongo abelii (Sumatran orangutan).